Consider the following 284-residue polypeptide: 4-diphosphocytidyl-2-C-methyl-D-erythritol kinase (284 aa).

Lys14 is a catalytic residue. 97-107 (PMGGGLGGGSS) is an ATP binding site. The active site involves Asp139.

Belongs to the GHMP kinase family. IspE subfamily.

It carries out the reaction 4-CDP-2-C-methyl-D-erythritol + ATP = 4-CDP-2-C-methyl-D-erythritol 2-phosphate + ADP + H(+). The protein operates within isoprenoid biosynthesis; isopentenyl diphosphate biosynthesis via DXP pathway; isopentenyl diphosphate from 1-deoxy-D-xylulose 5-phosphate: step 3/6. Its function is as follows. Catalyzes the phosphorylation of the position 2 hydroxy group of 4-diphosphocytidyl-2C-methyl-D-erythritol. In Psychromonas ingrahamii (strain DSM 17664 / CCUG 51855 / 37), this protein is 4-diphosphocytidyl-2-C-methyl-D-erythritol kinase.